Reading from the N-terminus, the 459-residue chain is Beta-glucosidase (459 aa).

The active-site Proton donor is Glu171. The active-site Nucleophile is Glu359.

The protein belongs to the glycosyl hydrolase 1 family.

The catalysed reaction is Hydrolysis of terminal, non-reducing beta-D-glucosyl residues with release of beta-D-glucose.. The sequence is that of Beta-glucosidase (abg) from Agrobacterium sp. (strain ATCC 21400).